The sequence spans 340 residues: GTPase Obg (340 aa).

An Obg domain is found at 1–161; that stretch reads MKFVDMTNIT…QHLLLELLLI (161 aa). One can recognise an OBG-type G domain in the interval 162–335; sequence ANVGIFGLPN…LCNSIMKFIM (174 aa). GTP contacts are provided by residues 168 to 175, 193 to 197, 215 to 218, 285 to 288, and 316 to 318; these read GLPNSGKS, FTTLV, DIPG, NKID, and SSI. Mg(2+) contacts are provided by S175 and T195.

Belongs to the TRAFAC class OBG-HflX-like GTPase superfamily. OBG GTPase family. In terms of assembly, monomer. Mg(2+) serves as cofactor.

The protein localises to the cytoplasm. In terms of biological role, an essential GTPase which binds GTP, GDP and possibly (p)ppGpp with moderate affinity, with high nucleotide exchange rates and a fairly low GTP hydrolysis rate. Plays a role in control of the cell cycle, stress response, ribosome biogenesis and in those bacteria that undergo differentiation, in morphogenesis control. The protein is GTPase Obg of Blochmanniella pennsylvanica (strain BPEN).